Here is a 146-residue protein sequence, read N- to C-terminus: Cyanate hydratase (146 aa).

Residues arginine 87, glutamate 90, and serine 113 contribute to the active site.

Belongs to the cyanase family.

It carries out the reaction cyanate + hydrogencarbonate + 3 H(+) = NH4(+) + 2 CO2. Its function is as follows. Catalyzes the reaction of cyanate with bicarbonate to produce ammonia and carbon dioxide. The sequence is that of Cyanate hydratase from Pseudomonas putida (strain ATCC 700007 / DSM 6899 / JCM 31910 / BCRC 17059 / LMG 24140 / F1).